A 73-amino-acid chain; its full sequence is Alternative prion protein (73 aa).

The helical transmembrane segment at 32 to 52 (WWWLGAASWWWLGAAPWWWLG) threads the bilayer.

Detected in brain homogenate, primary neurons, and peripheral blood mononuclear cells (at protein level).

It localises to the mitochondrion outer membrane. The polypeptide is Alternative prion protein (PRNP) (Homo sapiens (Human)).